Consider the following 103-residue polypeptide: Small ribosomal subunit protein eS24 (103 aa).

It belongs to the eukaryotic ribosomal protein eS24 family.

The polypeptide is Small ribosomal subunit protein eS24 (Methanococcus maripaludis (strain C6 / ATCC BAA-1332)).